A 795-amino-acid polypeptide reads, in one-letter code: Serine/threonine-protein kinase MARK1 (795 aa).

Residues 1 to 41 are disordered; it reads MSARTPLPTVNERDTENHTSVDGYTETHIPPAKSSSRQNLP. Residue T5 is modified to Phosphothreonine. The region spanning 60–311 is the Protein kinase domain; it reads YRLQKTIGKG…LEQIMKDRWM (252 aa). ATP is bound by residues 66–74 and K89; that span reads IGKGNFAKV. D182 acts as the Proton acceptor in catalysis. T208 carries the post-translational modification Phosphothreonine. A Phosphothreonine; by LKB1 and TAOK1 modification is found at T215. Phosphoserine; by GSK3-beta is present on S219. The UBA domain maps to 329 to 370; it reads DLSDAKRIDIMVTMGFARDEINDALVSQKYDEVMATYILLGR. Disordered stretches follow at residues 377 to 498 and 518 to 699; these read GGES…SGGS and QNGR…KPRS. A phosphoserine mark is found at S382, S390, S393, S403, S423, and S444. Polar residues predominate over residues 387 to 403; the sequence is CQRSRPSSDLNNSTLQS. The span at 447-459 shows a compositional bias: basic and acidic residues; that stretch reads SEQKEEWGKDTAR. Polar residues predominate over residues 462-473; sequence GSTTVGSKSEVT. The residue at position 475 (S475) is a Phosphoserine. A compositionally biased stretch (polar residues) spans 486–495; it reads TASPSNNVYS. Composition is skewed to low complexity over residues 523–547 and 585–599; these read SSLT…GPSA and PAAS…ASTP. Phosphoserine is present on S588. The residue at position 613 (T613) is a Phosphothreonine; by PKC/PRKCZ. Residues 647–657 are compositionally biased toward polar residues; that stretch reads GTSTGIISKIT. Basic and acidic residues-rich tracts occupy residues 661-676 and 683-697; these read VRRD…RADT and DPKE…EAKP. Position 666 is a phosphoserine (S666). Residues 746–795 enclose the KA1 domain; it reads DARQDSLVQWEMEVCKLPRLSLNGVRFKRISGTSIAFKNIASKIANELKL.

The protein belongs to the protein kinase superfamily. CAMK Ser/Thr protein kinase family. SNF1 subfamily. In terms of assembly, interacts with MAPT/TAU. The cofactor is Mg(2+). Post-translationally, phosphorylated at Thr-215 by STK11/LKB1 in complex with STE20-related adapter-alpha (STRADA) pseudo kinase and CAB39. Phosphorylation at Thr-215 by TAOK1 activates the kinase activity, leading to phosphorylation and detachment of MAPT/TAU from microtubules. Phosphorylation at Ser-219 by GSK3-beta (GSK3B) inhibits the kinase activity. Phosphorylation at Thr-613 by PRKCZ/aPKC in polarized epithelial cells inhibits the kinase activity.

The protein resides in the cell membrane. The protein localises to the cytoplasm. It is found in the cytoskeleton. It localises to the cell projection. Its subcellular location is the dendrite. The catalysed reaction is L-seryl-[protein] + ATP = O-phospho-L-seryl-[protein] + ADP + H(+). It carries out the reaction L-threonyl-[protein] + ATP = O-phospho-L-threonyl-[protein] + ADP + H(+). The enzyme catalyses L-seryl-[tau protein] + ATP = O-phospho-L-seryl-[tau protein] + ADP + H(+). It catalyses the reaction L-threonyl-[tau protein] + ATP = O-phospho-L-threonyl-[tau protein] + ADP + H(+). With respect to regulation, inhibited by phosphorylation at Ser-219. Activated by phosphorylation on Thr-215. Serine/threonine-protein kinase. Involved in cell polarity and microtubule dynamics regulation. Phosphorylates DCX, MAP2 and MAP4. Phosphorylates the microtubule-associated protein MAPT/TAU. Involved in cell polarity by phosphorylating the microtubule-associated proteins MAP2, MAP4 and MAPT/TAU at KXGS motifs, causing detachment from microtubules, and their disassembly. Involved in the regulation of neuronal migration through its dual activities in regulating cellular polarity and microtubule dynamics, possibly by phosphorylating and regulating DCX. Also acts as a positive regulator of the Wnt signaling pathway, probably by mediating phosphorylation of dishevelled proteins (DVL1, DVL2 and/or DVL3). In Mus musculus (Mouse), this protein is Serine/threonine-protein kinase MARK1.